A 751-amino-acid chain; its full sequence is MIHQYFAACPKGLEGLLLQELQALGATDTRETIAGVYFNGDLNLAYRTCLWSRLANKILLPLANFEVNSQEDLYEGVRMLPWQDHLSPSGSLLVDFVGTNDAIRNTQFGALKVKDAIVDCLRDFSGVRPNIAKRDPDLLVNARLSKNKLVLSIDLSGESLHRRGYRLKQGSAPLKENLAAGILIRAGWPEVAAQGGALLDPMCGSGTFLVEAALMAADIAPGLGRASFGFERWLNHRNDLWLTLREEAHHRRKLGLAKVNLPEIRGYDADVRVVRAAEENIISAELDHWLRVSRKELAEFKKPTHRAMDYGLVLSNPPYGERLGEIESLKLLYAHLGERLRNEFPGWRAGVFTGNPELGKQMGLRADKKYKFFNGTIASELLMFSINTDVFVQSRVEQDGRFSKDEVERDAAEQKVKAAAKEEQAAALSNGAQMLVNRLQKNRKQLEKWARKNEVSCYRLYDADMPEYAAAIDLYLGQTPPNRAPQLYAHVQEYAAPKSVDEARAAQRFADIEAAVPYALDIPVSHISYKQRRRNKGSSQYEKLNERPTGDLFSVQEGQAKLHINLWQYLDTGLFLDHRPVRHMIANMARDKRFLNLFCYTATASVHAAMGGARYTVSVDMSNTYLNWARKNFALNGLSEARNRLEQADCLKWLENNDQQFDLILLDPPSFSNSKRMEDILDIQRDHVEMIHNAMRSLSEEGTLIFSNNLRNFKLDLEALGAYNIEDISARTIDEDFKRNPKIHQCWLIRH.

The THUMP domain maps to 44-155 (LAYRTCLWSR…KNKLVLSIDL (112 aa)).

Belongs to the methyltransferase superfamily. RlmKL family.

Its subcellular location is the cytoplasm. The enzyme catalyses guanosine(2445) in 23S rRNA + S-adenosyl-L-methionine = N(2)-methylguanosine(2445) in 23S rRNA + S-adenosyl-L-homocysteine + H(+). The catalysed reaction is guanosine(2069) in 23S rRNA + S-adenosyl-L-methionine = N(2)-methylguanosine(2069) in 23S rRNA + S-adenosyl-L-homocysteine + H(+). In terms of biological role, specifically methylates the guanine in position 2445 (m2G2445) and the guanine in position 2069 (m7G2069) of 23S rRNA. The chain is Ribosomal RNA large subunit methyltransferase K/L from Cellvibrio japonicus (strain Ueda107) (Pseudomonas fluorescens subsp. cellulosa).